Here is a 129-residue protein sequence, read N- to C-terminus: Small ribosomal subunit protein uS11 (129 aa).

The protein belongs to the universal ribosomal protein uS11 family. As to quaternary structure, part of the 30S ribosomal subunit. Interacts with proteins S7 and S18. Binds to IF-3.

Functionally, located on the platform of the 30S subunit, it bridges several disparate RNA helices of the 16S rRNA. Forms part of the Shine-Dalgarno cleft in the 70S ribosome. This chain is Small ribosomal subunit protein uS11, found in Geobacillus stearothermophilus (Bacillus stearothermophilus).